A 215-amino-acid chain; its full sequence is Pyridoxine/pyridoxamine 5'-phosphate oxidase (215 aa).

Substrate-binding positions include 9–12 (RRDY) and K69. FMN is bound by residues 64 to 69 (RVLLLK), 79 to 80 (FS), K86, and Q108. Residues Y126, R130, and S134 each contribute to the substrate site. Residues 143-144 (QS) and W188 each bind FMN. 194 to 196 (RLH) contributes to the substrate binding site. R198 lines the FMN pocket.

Belongs to the pyridoxamine 5'-phosphate oxidase family. As to quaternary structure, homodimer. Requires FMN as cofactor.

It carries out the reaction pyridoxamine 5'-phosphate + O2 + H2O = pyridoxal 5'-phosphate + H2O2 + NH4(+). The catalysed reaction is pyridoxine 5'-phosphate + O2 = pyridoxal 5'-phosphate + H2O2. The protein operates within cofactor metabolism; pyridoxal 5'-phosphate salvage; pyridoxal 5'-phosphate from pyridoxamine 5'-phosphate: step 1/1. Its pathway is cofactor metabolism; pyridoxal 5'-phosphate salvage; pyridoxal 5'-phosphate from pyridoxine 5'-phosphate: step 1/1. In terms of biological role, catalyzes the oxidation of either pyridoxine 5'-phosphate (PNP) or pyridoxamine 5'-phosphate (PMP) into pyridoxal 5'-phosphate (PLP). This is Pyridoxine/pyridoxamine 5'-phosphate oxidase from Ectopseudomonas mendocina (strain ymp) (Pseudomonas mendocina).